A 54-amino-acid polypeptide reads, in one-letter code: TATVDCSGYPQSACPQDYVPFCGSDNKTYSNKCNFCNAVADSNGTLTLSHFGKC.

The region spanning 4–54 (VDCSGYPQSACPQDYVPFCGSDNKTYSNKCNFCNAVADSNGTLTLSHFGKC) is the Kazal-like domain. Cystine bridges form between Cys6–Cys36, Cys14–Cys33, and Cys22–Cys54. N-linked (GlcNAc...) asparagine glycosylation occurs at Asn43.

The protein localises to the secreted. The chain is Ovomucoid from Gallirallus australis (Weka).